The following is a 412-amino-acid chain: DNA polymerase IV 2 (412 aa).

The UmuC domain occupies 7–192 (IFLVDMQSFY…LPVGSMFGVG (186 aa)). Mg(2+)-binding residues include Asp11 and Asp107. Glu108 is an active-site residue.

This sequence belongs to the DNA polymerase type-Y family. Monomer. Mg(2+) is required as a cofactor.

It localises to the cytoplasm. It carries out the reaction DNA(n) + a 2'-deoxyribonucleoside 5'-triphosphate = DNA(n+1) + diphosphate. In terms of biological role, poorly processive, error-prone DNA polymerase involved in untargeted mutagenesis. Copies undamaged DNA at stalled replication forks, which arise in vivo from mismatched or misaligned primer ends. These misaligned primers can be extended by PolIV. Exhibits no 3'-5' exonuclease (proofreading) activity. May be involved in translesion synthesis (TSL), in conjunction with the beta clamp from PolIII. The sequence is that of DNA polymerase IV 2 (dinB2) from Bacillus subtilis (strain 168).